We begin with the raw amino-acid sequence, 291 residues long: Maintenance of mitochondrial morphology protein 1 (291 aa).

The Lumenal segment spans residues 1 to 16; sequence MPNNYVFSLQPTFTQG. Residues 17–37 traverse the membrane as a helical segment; sequence LILGQLSILVLLGMILKFLFL. The Cytoplasmic portion of the chain corresponds to 38 to 291; it reads DSTQHPFESS…KKEMSDADLS (254 aa). The SMP-LTD domain maps to 73–277; sequence NAESAEWFNV…LPGLASVVDV (205 aa).

The protein belongs to the MMM1 family. As to quaternary structure, homodimer. Component of the ER-mitochondria encounter structure (ERMES) or MDM complex, composed of MMM1, MDM10, MDM12 and MDM34. An MMM1 homodimer associates with one molecule of MDM12 on each side in a pairwise head-to-tail manner, and the SMP-LTD domains of MMM1 and MDM12 generate a continuous hydrophobic tunnel for phospholipid trafficking.

The protein localises to the endoplasmic reticulum membrane. Functionally, component of the ERMES/MDM complex, which serves as a molecular tether to connect the endoplasmic reticulum (ER) and mitochondria. Components of this complex are involved in the control of mitochondrial shape and protein biogenesis, and function in nonvesicular lipid trafficking between the ER and mitochondria. The MDM12-MMM1 subcomplex functions in the major beta-barrel assembly pathway that is responsible for biogenesis of all outer membrane beta-barrel proteins, and acts in a late step after the SAM complex. The MDM10-MDM12-MMM1 subcomplex further acts in the TOM40-specific pathway after the action of the MDM12-MMM1 complex. Essential for establishing and maintaining the structure of mitochondria and maintenance of mtDNA nucleoids. The sequence is that of Maintenance of mitochondrial morphology protein 1 from Laccaria bicolor (strain S238N-H82 / ATCC MYA-4686) (Bicoloured deceiver).